A 640-amino-acid chain; its full sequence is 1-deoxy-D-xylulose-5-phosphate synthase (640 aa).

Residues His-72 and 113–115 (GHA) contribute to the thiamine diphosphate site. Residue Asp-144 coordinates Mg(2+). Thiamine diphosphate-binding positions include 145–146 (GA), Asn-174, Tyr-287, and Glu-370. Residue Asn-174 participates in Mg(2+) binding.

The protein belongs to the transketolase family. DXPS subfamily. As to quaternary structure, homodimer. Requires Mg(2+) as cofactor. Thiamine diphosphate is required as a cofactor.

The catalysed reaction is D-glyceraldehyde 3-phosphate + pyruvate + H(+) = 1-deoxy-D-xylulose 5-phosphate + CO2. It participates in metabolic intermediate biosynthesis; 1-deoxy-D-xylulose 5-phosphate biosynthesis; 1-deoxy-D-xylulose 5-phosphate from D-glyceraldehyde 3-phosphate and pyruvate: step 1/1. Its function is as follows. Catalyzes the acyloin condensation reaction between C atoms 2 and 3 of pyruvate and glyceraldehyde 3-phosphate to yield 1-deoxy-D-xylulose-5-phosphate (DXP). This chain is 1-deoxy-D-xylulose-5-phosphate synthase, found in Synechococcus sp. (strain RCC307).